Here is a 254-residue protein sequence, read N- to C-terminus: Arginine/ornithine transport ATP-binding protein AotP (254 aa).

An ABC transporter domain is found at 4–249; that stretch reads LEVQDLHKRY…PQSDRLKQFL (246 aa). 36 to 43 serves as a coordination point for ATP; sequence GSSGSGKS.

Belongs to the ABC transporter superfamily.

Its subcellular location is the cell inner membrane. Functionally, part of the arginine-inducible binding-protein-dependent transport system for arginine and ornithine. Probably responsible for energy coupling to the transport system. In Pseudomonas aeruginosa (strain ATCC 15692 / DSM 22644 / CIP 104116 / JCM 14847 / LMG 12228 / 1C / PRS 101 / PAO1), this protein is Arginine/ornithine transport ATP-binding protein AotP (aotP).